We begin with the raw amino-acid sequence, 1173 residues long: DNA-directed RNA polymerase subunit beta (1173 aa).

It belongs to the RNA polymerase beta chain family. As to quaternary structure, the RNAP catalytic core consists of 2 alpha, 1 beta, 1 beta' and 1 omega subunit. When a sigma factor is associated with the core the holoenzyme is formed, which can initiate transcription.

It catalyses the reaction RNA(n) + a ribonucleoside 5'-triphosphate = RNA(n+1) + diphosphate. Its function is as follows. DNA-dependent RNA polymerase catalyzes the transcription of DNA into RNA using the four ribonucleoside triphosphates as substrates. The polypeptide is DNA-directed RNA polymerase subunit beta (Kosmotoga olearia (strain ATCC BAA-1733 / DSM 21960 / TBF 19.5.1)).